The sequence spans 137 residues: Proofreading thioesterase EntH (137 aa).

The active-site Nucleophile or proton acceptor is the E63.

Belongs to the thioesterase PaaI family. In terms of assembly, homotetramer. Dimer of dimers. Interacts specifically with the aryl carrier protein (ArCP) domain of EntB.

The protein resides in the cytoplasm. Its pathway is siderophore biosynthesis; enterobactin biosynthesis. Its function is as follows. Required for optimal enterobactin synthesis. Acts as a proofreading enzyme that prevents EntB misacylation by hydrolyzing the thioester bound existing between EntB and wrongly charged molecules. The sequence is that of Proofreading thioesterase EntH from Cronobacter turicensis (strain DSM 18703 / CCUG 55852 / LMG 23827 / z3032).